A 310-amino-acid chain; its full sequence is MAQKPVDNITQIIGGTPVVKLRNVVDDNAADVYVKLEYQNPGGSVKDRIALAMIEKAEREGKIKPGDTIVEPTSGNTGIGLAFVCAAKGYKAVFTMPETMSQERRNLLKAYGAELVLTPGSEAMKGAIKKAKELKEEHGYFEPQQFENPANPEVHELTTGPELLQQFEGKTIDAFLAGVGTGGTLSGVGKVLKKEYPNIEIVAIEPEASPVLSGGEPGPHKLQGLGAGFIPGTLNTEIYDSIIKVGNDTAMEMSRRVAKEEGILAGISSGAAIYAAIQKAKELGKGKTVVTVLPSNGERYLSTPLYSFDD.

Position 46 is an N6-(pyridoxal phosphate)lysine (Lys-46). Residues Asn-76, 180 to 184 (GTGGT), and Ser-268 contribute to the pyridoxal 5'-phosphate site.

Belongs to the cysteine synthase/cystathionine beta-synthase family. As to quaternary structure, homodimer. Requires pyridoxal 5'-phosphate as cofactor.

It carries out the reaction O-acetyl-L-serine + hydrogen sulfide = L-cysteine + acetate. It functions in the pathway amino-acid biosynthesis; L-cysteine biosynthesis; L-cysteine from L-serine: step 2/2. This Staphylococcus aureus (strain Mu50 / ATCC 700699) protein is Cysteine synthase (cysK).